Consider the following 170-residue polypeptide: Urease accessory protein UreE (170 aa).

Positions 134-170 are disordered; it reads ESGAYGGGHHHHGDDGHHPLAPIPLRQKIHRPSDKAE.

Belongs to the UreE family.

The protein resides in the cytoplasm. Functionally, involved in urease metallocenter assembly. Binds nickel. Probably functions as a nickel donor during metallocenter assembly. This Janthinobacterium sp. (strain Marseille) (Minibacterium massiliensis) protein is Urease accessory protein UreE.